The primary structure comprises 165 residues: MLNQLESLTERVGGSNKLVDRWLHVRKQLLVAYYNLVGIKPGKESYMRLNEKALDNFCQSLVDYLSDGHFNIYERIIREMEGTNPYLAATKLYPQLEANTQQIMDYYDSTLENAIDQDNYLEFQQALSDLGEALEGRFTLEDKLIALALDNNLKASNEDNVARPA.

Belongs to the Rsd/AlgQ family. Interacts with RpoD.

Its subcellular location is the cytoplasm. Functionally, binds RpoD and negatively regulates RpoD-mediated transcription activation by preventing the interaction between the primary sigma factor RpoD with the catalytic core of the RNA polymerase and with promoter DNA. May be involved in replacement of the RNA polymerase sigma subunit from RpoD to RpoS during the transition from exponential growth to the stationary phase. In Enterobacter sp. (strain 638), this protein is Regulator of sigma D.